The primary structure comprises 1235 residues: Ubiquitin carboxyl-terminal hydrolase 40 (1235 aa).

A USP domain is found at 41-482 (SGIRNQGGTC…SAYMLFYRKA (442 aa)). Residue Cys50 is the Nucleophile of the active site. The Proton acceptor role is filled by His305.

This sequence belongs to the peptidase C19 family.

The enzyme catalyses Thiol-dependent hydrolysis of ester, thioester, amide, peptide and isopeptide bonds formed by the C-terminal Gly of ubiquitin (a 76-residue protein attached to proteins as an intracellular targeting signal).. The protein is Ubiquitin carboxyl-terminal hydrolase 40 (Usp40) of Mus musculus (Mouse).